Reading from the N-terminus, the 486-residue chain is Argininosuccinate lyase (486 aa).

It belongs to the lyase 1 family. Argininosuccinate lyase subfamily.

It localises to the cytoplasm. It catalyses the reaction 2-(N(omega)-L-arginino)succinate = fumarate + L-arginine. It functions in the pathway amino-acid biosynthesis; L-arginine biosynthesis; L-arginine from L-ornithine and carbamoyl phosphate: step 3/3. This Acidovorax ebreus (strain TPSY) (Diaphorobacter sp. (strain TPSY)) protein is Argininosuccinate lyase.